The primary structure comprises 75 residues: Brevinin-2HS2A (75 aa).

The N-terminal stretch at Met-1–Cys-22 is a signal peptide. A propeptide spanning residues Gln-23–Val-40 is cleaved from the precursor. A disulfide bond links Cys-69 and Cys-75.

The protein belongs to the frog skin active peptide (FSAP) family. Brevinin subfamily. In terms of tissue distribution, expressed by the skin glands.

Its subcellular location is the secreted. Its function is as follows. Has antimicrobial activity against some Gram-positive bacteria and fungi but has no activity against a range of Gram-negative bacteria except P.faecalis. Has antimicrobial activity against the Gram-positive bacteria S.aureus ATCC 25923 (MIC=19 uM), B.licheniformis X39 (MIC=37.5 uM) and R.rhodochrous X15 (MIC=9.5 uM), is virtually inactive against E.faecium 091299 (MIC=150 uM) and S.carnosus KHS (MIC=150 uM) and inactive against E.faecalis 981. Active against the Gram-negative bacterium P.faecalis X29 (MIC=9.5 uM) and is inactive against E.coli, P.aeruginosa and S.typhi. Active against C.albicans ATCC 2002 (MIC=19 uM) and is also active against the slime mold 090223 (MIC=37.5 uM). Has extremely low hemolytic activity against human erythrocytes (LC(50)=300 uM). The protein is Brevinin-2HS2A of Odorrana hainanensis (Odor frog).